Reading from the N-terminus, the 517-residue chain is zeta-carotene-forming phytoene desaturase (517 aa).

Residue 11–44 (VVVGAGVGGLAAAARLAHQGFDVQVFEKTQGPGG) coordinates FAD.

The protein belongs to the carotenoid/retinoid oxidoreductase family. Requires FAD as cofactor.

It carries out the reaction 15-cis-phytoene + 2 A = all-trans-zeta-carotene + 2 AH2. It participates in carotenoid biosynthesis; lycopene biosynthesis. In terms of biological role, dehydrogenates carotenes in the cis conformation: has cis-to-trans isomerase activity and mediates dehydrogenation of cis-phytoene, producing zeta-carotene via the intermediary of phytofluene by the symmetrical introduction of 2 double bonds at the C-11 and C-11' positions of phytoene. In Myxococcus xanthus, this protein is zeta-carotene-forming phytoene desaturase (carA2).